We begin with the raw amino-acid sequence, 1597 residues long: THO complex subunit 2 (1597 aa).

2 disordered regions span residues 1250–1274 and 1384–1597; these read KSQRLQNDPPKSVASGSAGLNSKDR and EPYP…RYQR. A compositionally biased stretch (polar residues) spans 1419–1430; it reads GSSNYRGPSNDR. Composition is skewed to basic and acidic residues over residues 1458–1490, 1500–1512, 1522–1545, and 1554–1567; these read TYNDRSRALRPTGPDRGDGFDQRDNRLREEYKK, FPEKPFQEGKDSS, YKRDSPSENEEKPNKRFKKDETIR, and RNTRDSGAAHRANE. Over residues 1568 to 1582 the composition is skewed to polar residues; that stretch reads NQRYNGNRKSNTQAL.

Belongs to the THOC2 family. Component of the THO complex, which is composed of HPR1, MFT1, THO2 and THP2. Together with SUB2, TEX1 and YRA1, THO forms the transcription/export (TREX) complex. THO associates with DNA and RNA in vitro.

Its subcellular location is the nucleus. Component the THO subcomplex of the TREX complex, which operates in coupling transcription elongation to mRNA export. The THO complex is recruited to transcribed genes and moves along the gene with the elongating polymerase during transcription. THO is important for stabilizing nascent RNA in the RNA polymerase II elongation complex by preventing formation of DNA:RNA hybrids behind the elongating polymerase. It functions in cotranscriptional formation of an export-competent messenger ribonucleoprotein particle (mRNP) by facilitating the loading of ATP-dependent RNA helicase SUB2 and the mRNA export factor YRA1 along the nascent mRNA. The sequence is that of THO complex subunit 2 (THO2) from Saccharomyces cerevisiae (strain ATCC 204508 / S288c) (Baker's yeast).